Reading from the N-terminus, the 444-residue chain is Na(+)-translocating NADH-quinone reductase subunit A (444 aa).

The protein belongs to the NqrA family. Composed of six subunits; NqrA, NqrB, NqrC, NqrD, NqrE and NqrF.

The enzyme catalyses a ubiquinone + n Na(+)(in) + NADH + H(+) = a ubiquinol + n Na(+)(out) + NAD(+). Functionally, NQR complex catalyzes the reduction of ubiquinone-1 to ubiquinol by two successive reactions, coupled with the transport of Na(+) ions from the cytoplasm to the periplasm. NqrA to NqrE are probably involved in the second step, the conversion of ubisemiquinone to ubiquinol. The polypeptide is Na(+)-translocating NADH-quinone reductase subunit A (Shewanella frigidimarina (strain NCIMB 400)).